The chain runs to 757 residues: DNA endonuclease RBBP8 (757 aa).

The tract at residues 22 to 45 (DLWTKLKEYHDKETQGLQVKVTKL) is essential for binding to the MRN complex and for RPA focus formation on DNA damage. The stretch at 35 to 84 (TQGLQVKVTKLKKERILDAQRLEEFFTKNQQLREQQKVLHETIKVLEDRL) forms a coiled coil. Positions 45–160 (LKKERILDAQ…TDLESEEDVI (116 aa)) are required for interaction with LMO4, probably by stabilizing the interaction through RPPB8 dimerization. Residues Lys62 and Lys115 each participate in a glycyl lysine isopeptide (Lys-Gly) (interchain with G-Cter in SUMO2) cross-link. Positions 117-138 (ITELMNEKNTLQEENKKLSEQL) form a coiled coil. Lys193 is covalently cross-linked (Glycyl lysine isopeptide (Lys-Gly) (interchain with G-Cter in SUMO2)). Position 272 is a phosphoserine (Ser272). Thr309 bears the Phosphothreonine mark. Ser320, Ser321, and Ser343 each carry phosphoserine. A disordered region spans residues 348–375 (GKKTHLKTVPLSNTSAPGPEKPRSKSED). Residues Lys354 and Lys372 each participate in a glycyl lysine isopeptide (Lys-Gly) (interchain with G-Cter in SUMO2) cross-link. At Ser373 the chain carries Phosphoserine. Glycyl lysine isopeptide (Lys-Gly) (interchain with G-Cter in SUMO2) cross-links involve residues Lys390, Lys399, and Lys405. Positions 407–417 (TSEPISEQGNI) are enriched in polar residues. A disordered region spans residues 407-430 (TSEPISEQGNIGHSKDTDRDKHVV). Basic and acidic residues predominate over residues 419–429 (HSKDTDRDKHV). Glycyl lysine isopeptide (Lys-Gly) (interchain with G-Cter in SUMO2) cross-links involve residues Lys433 and Lys443. The segment at 484–488 (PLDLS) is PXDLS motif. The PXDLS motif signature appears at 484 to 488 (PLDLS). A damage-recruitment motif region spans residues 503–551 (CENSKIRFRQVTLYEALKPIPRDSSSSRKALSGSCGLTKDSPEEPCLQE). Lys520 is covalently cross-linked (Glycyl lysine isopeptide (Lys-Gly) (interchain with G-Cter in SUMO2); alternate). Positions 524–544 (RDSSSSRKALSGSCGLTKDSP) are disordered. Residues Lys564 and Lys570 each participate in a glycyl lysine isopeptide (Lys-Gly) (interchain with G-Cter in SUMO2) cross-link. Lys596 participates in a covalent cross-link: Glycyl lysine isopeptide (Lys-Gly) (interchain with G-Cter in SUMO2); alternate. Glycyl lysine isopeptide (Lys-Gly) (interchain with G-Cter in SUMO2) cross-links involve residues Lys605, Lys630, and Lys632. The required for interaction with LMO4, probably by making physical contact with LMO4 stretch occupies residues 633-677 (SLQNNQDVSFENIQWSIDPGADLSQYKMGVTVDDTKDGSQSRLAG). Ser656 bears the Phosphoserine; by ATM mark. Lys668 is covalently cross-linked (Glycyl lysine isopeptide (Lys-Gly) (interchain with G-Cter in SUMO2)). Ser671 is subject to Phosphoserine. The span at 696 to 728 (KKQEQKGEESPNGERKMNDSLEDMFDRTTHEEY) shows a compositional bias: basic and acidic residues. Positions 696 to 757 (KKQEQKGEES…TTTKKPNISW (62 aa)) are disordered. Lys711 participates in a covalent cross-link: Glycyl lysine isopeptide (Lys-Gly) (interchain with G-Cter in SUMO2). A Phosphoserine modification is found at Ser715. Residues 747–757 (STTTKKPNISW) are compositionally biased toward polar residues.

It belongs to the COM1/SAE2/CtIP family. In terms of assembly, homotetramer; formed by antiparallel association of helical extensions protruding from the N-termini of two parallel coiled-coil dimers. Forms a dumbbell-shaped particle in which polar globular domains are held about 30 nm apart by a central rod. Homotetramerization is required for DNA-end resection and repair. Interacts (via the PXDLS motif) with CTBP1; the interaction is disrupted via binding of the adenovirus E1A to CTBP1. Component of the BRCA1-RBBP8 complex. Interacts (the Ser-321 phosphorylated form) with BRCA1 (via the C-terminal BRCT domains): the interaction occurs in the G2 phase, ubiquitinates RBBP8 and involves RBBP8 in BRCA1-dependent G2/M checkpoint control on DNA damage. Interacts with RB1. Interacts with the MRN complex. Interacts directly with MRE11; the interaction is required for efficient homologous recombination (HR) and regulation of the MRN complex. Interacts directly with RAD50. Interacts (when phosphorylated by CDK1) with NBN; promoting association with the MRN complex. Interacts with LMO4 (via the LIM zinc-binding 1 domain). Interacts with SIAH1. Interacts with RNF138. Interacts with EXD2. Interacts with CUL3 and KLHL15; this interaction leads to RBBP8 proteasomal degradation. Directly interacts with PIN1; this interaction depends upon RBBP8 phosphorylation, predominantly at Thr-309. Interacts with FZR1; this interaction leads to APC/C-mediated RBBP8 proteasomal degradation. Interacts with AUNIP; leading to recruit RBBP8 to sites of DNA damage. Interacts with SAMHD1. Interacts with HDGFL2. In terms of processing, hyperphosphorylation upon ionizing radiation results in dissociation from BRCA1. Phosphorylation by CDK1 is essential for the recruitment to DNA and the DNA repair function. Phosphorylated on Ser-321 as cells enter G2 phase. This phosphorylation is required for binding BRCA1 and for the G2/M DNA damage transition checkpoint control. Phosphorylation at Thr-309, probably catalyzed by CDK2, is required for PIN1-binding, while phosphorylation at Ser-272 serves as a PIN1 isomerization site. Phosphorylation at Thr-309 is cell-cycle dependent. It steadily increases during S phase, peaks at late S/G2 phase, and drops at G1. Phosphorylation is not required for tetramerization. Binds to DNA more strongly when dephosphorylated. Post-translationally, ubiquitinated. Ubiquitination at multiple sites by BRCA1 (via its N-terminal RING domain) does not lead to its proteasomal degradation but instead the ubiquitinated RBBP8 binds to chromatin following DNA damage and may play a role in G2/M checkpoint control. Ubiquitinated by RNF138 at its N-terminus. Ubiquitinated through 'Lys-48' by the E3 CUL3-KLHL15 complex; this modification leads to proteasomal degradation. Ubiquitinated by the E3 FZR1/APC/C complex; this modification leads to proteasomal degradation.

It localises to the nucleus. It is found in the chromosome. Endonuclease that cooperates with the MRE11-RAD50-NBN (MRN) complex in DNA-end resection, the first step of double-strand break (DSB) repair through the homologous recombination (HR) pathway. HR is restricted to S and G2 phases of the cell cycle and preferentially repairs DSBs resulting from replication fork collapse. Key determinant of DSB repair pathway choice, as it commits cells to HR by preventing classical non-homologous end-joining (NHEJ). Specifically promotes the endonuclease activity of the MRN complex to clear DNA ends containing protein adducts: recruited to DSBs by NBN following phosphorylation by CDK1, and promotes the endonuclease activity of MRE11 to clear protein-DNA adducts and generate clean double-strand break ends. Functions downstream of the MRN complex and ATM, promotes ATR activation and its recruitment to DSBs in the S/G2 phase facilitating the generation of ssDNA. Component of the BRCA1-RBBP8 complex that regulates CHEK1 activation and controls cell cycle G2/M checkpoints on DNA damage. During immunoglobulin heavy chain class-switch recombination, promotes microhomology-mediated alternative end joining (A-NHEJ) and plays an essential role in chromosomal translocations. Binds preferentially to DNA Y-junctions and to DNA substrates with blocked ends and promotes intermolecular DNA bridging. In Bos taurus (Bovine), this protein is DNA endonuclease RBBP8 (RBBP8).